A 277-amino-acid polypeptide reads, in one-letter code: Thiazole synthase (277 aa).

Lysine 119 (schiff-base intermediate with DXP) is an active-site residue. Residues glycine 180, 206–207 (AG), and 228–229 (NT) contribute to the 1-deoxy-D-xylulose 5-phosphate site.

It belongs to the ThiG family. As to quaternary structure, homotetramer. Forms heterodimers with either ThiH or ThiS.

The protein localises to the plastid. Its subcellular location is the chloroplast. It carries out the reaction [ThiS sulfur-carrier protein]-C-terminal-Gly-aminoethanethioate + 2-iminoacetate + 1-deoxy-D-xylulose 5-phosphate = [ThiS sulfur-carrier protein]-C-terminal Gly-Gly + 2-[(2R,5Z)-2-carboxy-4-methylthiazol-5(2H)-ylidene]ethyl phosphate + 2 H2O + H(+). It functions in the pathway cofactor biosynthesis; thiamine diphosphate biosynthesis. Functionally, catalyzes the rearrangement of 1-deoxy-D-xylulose 5-phosphate (DXP) to produce the thiazole phosphate moiety of thiamine. Sulfur is provided by the thiocarboxylate moiety of the carrier protein ThiS. In vitro, sulfur can be provided by H(2)S. The sequence is that of Thiazole synthase from Pyropia yezoensis (Susabi-nori).